A 236-amino-acid chain; its full sequence is Eukaryotic translation initiation factor 3 subunit J (236 aa).

Positions 1-84 (MADDWESAAD…LREEEAEAER (84 aa)) are disordered. Residues 28 to 46 (GEDEDEDIKDSWEDEEEKK) are compositionally biased toward acidic residues. Composition is skewed to basic and acidic residues over residues 47–58 (DEEKPTKTEAPA) and 68–77 (AKLEQQALRE).

This sequence belongs to the eIF-3 subunit J family. Component of the eukaryotic translation initiation factor 3 (eIF-3) complex. The eIF-3 complex interacts with pix.

It localises to the cytoplasm. Functionally, component of the eukaryotic translation initiation factor 3 (eIF-3) complex, which is involved in protein synthesis of a specialized repertoire of mRNAs and, together with other initiation factors, stimulates binding of mRNA and methionyl-tRNAi to the 40S ribosome. The eIF-3 complex specifically targets and initiates translation of a subset of mRNAs involved in cell proliferation. The polypeptide is Eukaryotic translation initiation factor 3 subunit J (Drosophila sechellia (Fruit fly)).